A 150-amino-acid chain; its full sequence is FAD synthase (150 aa).

ATP contacts are provided by residues 11 to 12 (TF), 16 to 19 (HPGH), aspartate 96, and tyrosine 124.

The protein belongs to the archaeal FAD synthase family. In terms of assembly, homodimer. The cofactor is a divalent metal cation.

The enzyme catalyses FMN + ATP + H(+) = FAD + diphosphate. Its pathway is cofactor biosynthesis; FAD biosynthesis; FAD from FMN: step 1/1. In terms of biological role, catalyzes the transfer of the AMP portion of ATP to flavin mononucleotide (FMN) to produce flavin adenine dinucleotide (FAD) coenzyme. This chain is FAD synthase, found in Methanococcus maripaludis (strain DSM 14266 / JCM 13030 / NBRC 101832 / S2 / LL).